A 367-amino-acid chain; its full sequence is B2 bradykinin receptor (367 aa).

Topologically, residues 1 to 36 are extracellular; the sequence is MLNLTSQVPEPALNGTLPQSSSCFHSDWWNWLNTIQ. N-linked (GlcNAc...) asparagine glycans are attached at residues asparagine 3 and asparagine 14. The chain crosses the membrane as a helical span at residues 37 to 60; it reads APFLWVLFLLAALENIFVLSVFCL. Residues 61–69 are Cytoplasmic-facing; the sequence is HKNSCTVAE. A helical membrane pass occupies residues 70–94; the sequence is IYLGNLAMADLILALGLPFWAITIA. Topologically, residues 95–107 are extracellular; that stretch reads NHFDWLFGEVLCR. Cysteines 106 and 187 form a disulfide. The helical transmembrane segment at 108–129 threads the bilayer; sequence VVNTMIYMNLYSSICFLMLVSI. Topologically, residues 130 to 151 are cytoplasmic; the sequence is DRYLALVKTMSMGRMRGVRWAK. At tyrosine 132 the chain carries Phosphotyrosine. The helical transmembrane segment at 152 to 174 threads the bilayer; that stretch reads LYSLVIWGCTLLLSSPMLAFRTM. Over 175–197 the chain is Extracellular; sequence HEYAAEGHNVTACIIKYPSRSWM. N-linked (GlcNAc...) asparagine glycosylation occurs at asparagine 183. Residues 198 to 224 form a helical membrane-spanning segment; sequence VFTNILLNSVGFLLPLSIITYCTVQIL. Topologically, residues 225–243 are cytoplasmic; sequence QVLRNNEMQKFKEIQTERK. The helical transmembrane segment at 244-268 threads the bilayer; that stretch reads ATVLVLAVLLLFVVCWLPFQISTFL. At 269 to 287 the chain is on the extracellular side; that stretch reads DTLLRLGVLSGCWDEHAVD. Residues 288 to 311 form a helical membrane-spanning segment; it reads VITQISSYVAYSNSGLNPLVYVIV. Over 312–367 the chain is Cytoplasmic; the sequence is GKRFRKKSREVYRVLCQKGGCMGEPVQMENSMGTLRTSISVERQIHKLQDWAGKKQ. Tyrosine 323 is subject to Phosphotyrosine. Cysteine 327 carries S-palmitoyl cysteine lipidation. Residue serine 342 is modified to Phosphoserine. Threonine 345 bears the Phosphothreonine mark. A phosphoserine; by GRK6 mark is found at serine 349 and serine 351.

It belongs to the G-protein coupled receptor 1 family. Bradykinin receptor subfamily. BDKRB2 sub-subfamily. As to quaternary structure, forms a complex with PECAM1 and GNAQ. Interacts with PECAM1.

It localises to the cell membrane. Receptor for bradykinin. It is associated with G proteins that activate a phosphatidylinositol-calcium second messenger system. This is B2 bradykinin receptor (BDKRB2) from Sus scrofa (Pig).